The sequence spans 110 residues: Large ribosomal subunit protein uL22 (110 aa).

This sequence belongs to the universal ribosomal protein uL22 family. As to quaternary structure, part of the 50S ribosomal subunit.

This protein binds specifically to 23S rRNA; its binding is stimulated by other ribosomal proteins, e.g. L4, L17, and L20. It is important during the early stages of 50S assembly. It makes multiple contacts with different domains of the 23S rRNA in the assembled 50S subunit and ribosome. Its function is as follows. The globular domain of the protein is located near the polypeptide exit tunnel on the outside of the subunit, while an extended beta-hairpin is found that lines the wall of the exit tunnel in the center of the 70S ribosome. In Shewanella amazonensis (strain ATCC BAA-1098 / SB2B), this protein is Large ribosomal subunit protein uL22.